Reading from the N-terminus, the 363-residue chain is Ribosomal RNA large subunit methyltransferase M (363 aa).

Residues Ser-194, 227 to 230 (CPGG), Asp-246, Asp-266, and Asp-284 each bind S-adenosyl-L-methionine. Lys-313 (proton acceptor) is an active-site residue.

It belongs to the class I-like SAM-binding methyltransferase superfamily. RNA methyltransferase RlmE family. RlmM subfamily. Monomer.

It is found in the cytoplasm. The enzyme catalyses cytidine(2498) in 23S rRNA + S-adenosyl-L-methionine = 2'-O-methylcytidine(2498) in 23S rRNA + S-adenosyl-L-homocysteine + H(+). Functionally, catalyzes the 2'-O-methylation at nucleotide C2498 in 23S rRNA. In Haemophilus influenzae (strain PittGG), this protein is Ribosomal RNA large subunit methyltransferase M.